We begin with the raw amino-acid sequence, 492 residues long: Probable protein phosphatase 2C 33 (492 aa).

A disordered region spans residues M1 to E46. Residues V24–G35 are compositionally biased toward basic residues. The region spanning V64–L393 is the PPM-type phosphatase domain. Residues D100, G101, D338, and D384 each coordinate Mn(2+). The disordered stretch occupies residues S406 to T468. The segment covering D412 to A427 has biased composition (acidic residues). The span at S441 to D460 shows a compositional bias: basic and acidic residues.

The protein belongs to the PP2C family. Mg(2+) is required as a cofactor. It depends on Mn(2+) as a cofactor.

The enzyme catalyses O-phospho-L-seryl-[protein] + H2O = L-seryl-[protein] + phosphate. It carries out the reaction O-phospho-L-threonyl-[protein] + H2O = L-threonyl-[protein] + phosphate. The polypeptide is Probable protein phosphatase 2C 33 (PPC6-1) (Arabidopsis thaliana (Mouse-ear cress)).